Consider the following 873-residue polypeptide: Alanine--tRNA ligase (873 aa).

4 residues coordinate Zn(2+): His562, His566, Cys664, and His668.

It belongs to the class-II aminoacyl-tRNA synthetase family. Requires Zn(2+) as cofactor.

The protein resides in the cytoplasm. It catalyses the reaction tRNA(Ala) + L-alanine + ATP = L-alanyl-tRNA(Ala) + AMP + diphosphate. Functionally, catalyzes the attachment of alanine to tRNA(Ala) in a two-step reaction: alanine is first activated by ATP to form Ala-AMP and then transferred to the acceptor end of tRNA(Ala). Also edits incorrectly charged Ser-tRNA(Ala) and Gly-tRNA(Ala) via its editing domain. The polypeptide is Alanine--tRNA ligase (Shewanella amazonensis (strain ATCC BAA-1098 / SB2B)).